Reading from the N-terminus, the 197-residue chain is 3-isopropylmalate dehydratase small subunit (197 aa).

This sequence belongs to the LeuD family. LeuD type 1 subfamily. As to quaternary structure, heterodimer of LeuC and LeuD.

It catalyses the reaction (2R,3S)-3-isopropylmalate = (2S)-2-isopropylmalate. It functions in the pathway amino-acid biosynthesis; L-leucine biosynthesis; L-leucine from 3-methyl-2-oxobutanoate: step 2/4. Functionally, catalyzes the isomerization between 2-isopropylmalate and 3-isopropylmalate, via the formation of 2-isopropylmaleate. This Acidothermus cellulolyticus (strain ATCC 43068 / DSM 8971 / 11B) protein is 3-isopropylmalate dehydratase small subunit.